Here is a 301-residue protein sequence, read N- to C-terminus: Probable alpha-L-glutamate ligase (301 aa).

Positions 104-287 (LQLLSRKGIG…IAGMIIEYIE (184 aa)) constitute an ATP-grasp domain. ATP contacts are provided by residues lysine 141, 178–179 (EY), aspartate 187, and 211–213 (RSN). Residues aspartate 248, glutamate 260, and asparagine 262 each coordinate Mg(2+). Mn(2+)-binding residues include aspartate 248, glutamate 260, and asparagine 262.

The protein belongs to the RimK family. Mg(2+) serves as cofactor. The cofactor is Mn(2+).

The polypeptide is Probable alpha-L-glutamate ligase (Methanococcoides burtonii (strain DSM 6242 / NBRC 107633 / OCM 468 / ACE-M)).